We begin with the raw amino-acid sequence, 185 residues long: Ribosome-recycling factor (185 aa).

It belongs to the RRF family.

Its subcellular location is the cytoplasm. Functionally, responsible for the release of ribosomes from messenger RNA at the termination of protein biosynthesis. May increase the efficiency of translation by recycling ribosomes from one round of translation to another. This is Ribosome-recycling factor from Aliivibrio fischeri (strain ATCC 700601 / ES114) (Vibrio fischeri).